The chain runs to 271 residues: Ribosomal RNA small subunit methyltransferase A (271 aa).

Residues histidine 11, leucine 13, glycine 38, glutamate 58, aspartate 86, and asparagine 101 each coordinate S-adenosyl-L-methionine.

This sequence belongs to the class I-like SAM-binding methyltransferase superfamily. rRNA adenine N(6)-methyltransferase family. RsmA subfamily.

It is found in the cytoplasm. The enzyme catalyses adenosine(1518)/adenosine(1519) in 16S rRNA + 4 S-adenosyl-L-methionine = N(6)-dimethyladenosine(1518)/N(6)-dimethyladenosine(1519) in 16S rRNA + 4 S-adenosyl-L-homocysteine + 4 H(+). Functionally, specifically dimethylates two adjacent adenosines (A1518 and A1519) in the loop of a conserved hairpin near the 3'-end of 16S rRNA in the 30S particle. May play a critical role in biogenesis of 30S subunits. The protein is Ribosomal RNA small subunit methyltransferase A of Helicobacter pylori (strain J99 / ATCC 700824) (Campylobacter pylori J99).